The following is a 51-amino-acid chain: Magnetosome protein Mms5 (51 aa).

Over 1-8 the chain is Lumenal; it reads MLSAKGVS. Residues 9–16 form an LG region region; sequence LGLGLGLG. The chain crosses the membrane as a helical span at residues 9-29; the sequence is LGLGLGLGAWGPVLLGVVGVA. The Cytoplasmic portion of the chain corresponds to 30–51; sequence GALALYGYYKNRNAEPAAAEAV.

Belongs to the magnetosome MamD/Mms5 family. Post-translationally, may undergo N-terminal cleavage.

Its subcellular location is the magnetosome membrane. Its function is as follows. Might be involved in magnetite crystal growth. In Magnetospirillum gryphiswaldense (strain DSM 6361 / JCM 21280 / NBRC 15271 / MSR-1), this protein is Magnetosome protein Mms5.